Reading from the N-terminus, the 147-residue chain is Mediator of RNA polymerase II transcription subunit 10 (147 aa).

The protein belongs to the Mediator complex subunit 10 family. Component of the Mediator complex.

Its subcellular location is the nucleus. In terms of biological role, component of the Mediator complex, a coactivator involved in the regulated transcription of nearly all RNA polymerase II-dependent genes. Mediator functions as a bridge to convey information from gene-specific regulatory proteins to the basal RNA polymerase II transcription machinery. Mediator is recruited to promoters by direct interactions with regulatory proteins and serves as a scaffold for the assembly of a functional preinitiation complex with RNA polymerase II and the general transcription factors. In Debaryomyces hansenii (strain ATCC 36239 / CBS 767 / BCRC 21394 / JCM 1990 / NBRC 0083 / IGC 2968) (Yeast), this protein is Mediator of RNA polymerase II transcription subunit 10 (NUT2).